A 232-amino-acid polypeptide reads, in one-letter code: LexA repressor (232 aa).

Positions 35–55 form a DNA-binding region, H-T-H motif; sequence IREIGDAAGLQSTSSVAYQLK. Over residues 61–85 the composition is skewed to basic and acidic residues; that stretch reads GFLRRDPNKPRAVDVRHLPETESRS. Residues 61–104 are disordered; that stretch reads GFLRRDPNKPRAVDVRHLPETESRSSKAATQAKSKAPQAGVHDP. The span at 86–99 shows a compositional bias: low complexity; the sequence is SKAATQAKSKAPQA. Residues Ser156 and Lys193 each act as for autocatalytic cleavage activity in the active site.

The protein belongs to the peptidase S24 family. As to quaternary structure, homodimer.

The catalysed reaction is Hydrolysis of Ala-|-Gly bond in repressor LexA.. Functionally, represses a number of genes involved in the response to DNA damage (SOS response), including recA and lexA. In the presence of single-stranded DNA, RecA interacts with LexA causing an autocatalytic cleavage which disrupts the DNA-binding part of LexA, leading to derepression of the SOS regulon and eventually DNA repair. This chain is LexA repressor, found in Corynebacterium glutamicum (strain ATCC 13032 / DSM 20300 / JCM 1318 / BCRC 11384 / CCUG 27702 / LMG 3730 / NBRC 12168 / NCIMB 10025 / NRRL B-2784 / 534).